Consider the following 131-residue polypeptide: Large ribosomal subunit protein uL24 (131 aa).

It belongs to the universal ribosomal protein uL24 family. Part of the 50S ribosomal subunit.

In terms of biological role, one of two assembly initiator proteins, it binds directly to the 5'-end of the 23S rRNA, where it nucleates assembly of the 50S subunit. Its function is as follows. Located at the polypeptide exit tunnel on the outside of the subunit. The protein is Large ribosomal subunit protein uL24 of Korarchaeum cryptofilum (strain OPF8).